Reading from the N-terminus, the 379-residue chain is Sensor histidine kinase YhcY (379 aa).

The Histidine kinase domain maps to 185–373 (RLAQELHDSV…KLSIRLPLKS (189 aa)). A Phosphohistidine; by autocatalysis modification is found at H191.

The enzyme catalyses ATP + protein L-histidine = ADP + protein N-phospho-L-histidine.. Its function is as follows. Member of the two-component regulatory system YhcY/YhcZ. Probably activates YhcZ by phosphorylation. This is Sensor histidine kinase YhcY (yhcY) from Bacillus subtilis (strain 168).